Here is a 352-residue protein sequence, read N- to C-terminus: NADP-dependent isopropanol dehydrogenase (352 aa).

Residues C37, H59, and D150 each coordinate Zn(2+). Residues 175-178 (IGPV), 198-200 (GSR), Y218, 265-267 (VNY), and K340 contribute to the NADP(+) site.

It belongs to the zinc-containing alcohol dehydrogenase family. As to quaternary structure, homotetramer. Zn(2+) is required as a cofactor.

It carries out the reaction propan-2-ol + NADP(+) = acetone + NADPH + H(+). Its function is as follows. Alcohol dehydrogenase with a preference for medium chain secondary alcohols, such as 2-butanol and isopropanol. Has very low activity with primary alcohols, such as ethanol. Under physiological conditions, the enzyme reduces aldehydes and 2-ketones to produce secondary alcohols. Is also active with acetaldehyde and propionaldehyde. The protein is NADP-dependent isopropanol dehydrogenase (adh) of Thermoanaerobacter brockii (Thermoanaerobium brockii).